The primary structure comprises 192 residues: uncharacterized protein (192 aa).

The 132-residue stretch at 29 to 160 (RRQAAVLIPL…PLDIQRRGHD (132 aa)) folds into the Nudix hydrolase domain. A Nudix box motif is present at residues 67 to 89 (GAVDSTDASLIAAALREAHEEVA). The Mg(2+) site is built by E83 and E87.

It belongs to the Nudix hydrolase family. PCD1 subfamily. The cofactor is Mn(2+). Requires Mg(2+) as cofactor.

Its function is as follows. Probably mediates the hydrolysis of some nucleoside diphosphate derivatives. This is an uncharacterized protein from Enterobacter sp. (strain 638).